Consider the following 252-residue polypeptide: Ribosomal RNA small subunit methyltransferase J (252 aa).

S-adenosyl-L-methionine-binding positions include 101 to 102 (RD), 117 to 118 (ER), 153 to 154 (SS), and Asp-171.

The protein belongs to the methyltransferase superfamily. RsmJ family.

Its subcellular location is the cytoplasm. It carries out the reaction guanosine(1516) in 16S rRNA + S-adenosyl-L-methionine = N(2)-methylguanosine(1516) in 16S rRNA + S-adenosyl-L-homocysteine + H(+). In terms of biological role, specifically methylates the guanosine in position 1516 of 16S rRNA. In Salmonella typhimurium (strain LT2 / SGSC1412 / ATCC 700720), this protein is Ribosomal RNA small subunit methyltransferase J.